Consider the following 338-residue polypeptide: 1-aminocyclopropane-1-carboxylate deaminase (338 aa).

N6-(pyridoxal phosphate)lysine is present on Lys-51. Ser-78 acts as the Nucleophile in catalysis.

It belongs to the ACC deaminase/D-cysteine desulfhydrase family. Homotrimer. Pyridoxal 5'-phosphate serves as cofactor.

It catalyses the reaction 1-aminocyclopropane-1-carboxylate + H2O = 2-oxobutanoate + NH4(+). In terms of biological role, catalyzes a cyclopropane ring-opening reaction, the irreversible conversion of 1-aminocyclopropane-1-carboxylate (ACC) to ammonia and alpha-ketobutyrate. Allows growth on ACC as a nitrogen source. The sequence is that of 1-aminocyclopropane-1-carboxylate deaminase from Pseudomonas syringae pv. syringae (strain B728a).